Consider the following 309-residue polypeptide: Taste receptor type 2 member 8 (309 aa).

At 1–7 (MFSPADN) the chain is on the extracellular side. A helical membrane pass occupies residues 8–28 (IFIILITGEFIIGILGNGYIG). Topologically, residues 29–50 (LVNWIDWIKKKKISTIDCILTN) are cytoplasmic. Residues 51–71 (LVISRICLISVMVVNGIVIVL) form a helical membrane-spanning segment. Topologically, residues 72–82 (YPDVYTKTKLQ) are extracellular. Residues 83 to 103 (IVICTFWTFANYLNMWFTACL) form a helical membrane-spanning segment. Topologically, residues 104 to 131 (NVFYSLKVANSSHPLFLWLKRKIDMVVR) are cytoplasmic. The chain crosses the membrane as a helical span at residues 132-152 (WILLGCFAISLLVSLIIATVL). Residues 153 to 184 (SHDYRFHAIAKHKRNVTEMFHVSKMPYFEPLT) lie on the Extracellular side of the membrane. Residue Asn-167 is glycosylated (N-linked (GlcNAc...) asparagine). A helical membrane pass occupies residues 185 to 205 (LFNLLAIVPFIVSLMSFFLLV). The Cytoplasmic portion of the chain corresponds to 206-239 (RSLWRHTKQIKLYATGGRDPSTEAHVRAIKTMTL). A helical transmembrane segment spans residues 240–260 (LIFFFFLYYITSLLVXFSYLI). The Extracellular segment spans residues 261 to 266 (TNYKLA). Residues 267–287 (MAFGEIVAILYPSGHSLILII) traverse the membrane as a helical segment. Topologically, residues 288–309 (LNNKLRQASVRMLTCRKIACVT) are cytoplasmic.

This sequence belongs to the G-protein coupled receptor T2R family.

The protein localises to the membrane. Functionally, receptor that may play a role in the perception of bitterness and is gustducin-linked. May play a role in sensing the chemical composition of the gastrointestinal content. The activity of this receptor may stimulate alpha gustducin, mediate PLC-beta-2 activation and lead to the gating of TRPM5. This is Taste receptor type 2 member 8 (TAS2R8) from Papio hamadryas (Hamadryas baboon).